We begin with the raw amino-acid sequence, 477 residues long: Glycogen synthase (477 aa).

An ADP-alpha-D-glucose-binding site is contributed by Lys15.

The protein belongs to the glycosyltransferase 1 family. Bacterial/plant glycogen synthase subfamily.

The catalysed reaction is [(1-&gt;4)-alpha-D-glucosyl](n) + ADP-alpha-D-glucose = [(1-&gt;4)-alpha-D-glucosyl](n+1) + ADP + H(+). It functions in the pathway glycan biosynthesis; glycogen biosynthesis. Functionally, synthesizes alpha-1,4-glucan chains using ADP-glucose. The protein is Glycogen synthase of Myxococcus xanthus (strain DK1622).